A 515-amino-acid polypeptide reads, in one-letter code: MFQRKTLQRRNLKGLNLNLHPDVGNNGQLQEKTETHQGQSRIEGHVMSNINAIQNNSNLFLRRGIKKKLTLDAFGDDQAISKPNTVVIQQPQNEPVLVLSSLSQSPCVSSSSSLSTPCIIDAYSNNFGLSPSSTNSTPSTIQGLSNIATPVENEHSISLPPLEESLSPAAADLKDTLSGTSNGNYIQLQDLVQLGKIGAGNSGTVVKALHVPDSKIVAKKTIPVEQNNSTIINQLVRELSIVKNVKPHENIITFYGAYYNQHINNEIIILMEYSDCGSLDKILSVYKRFVQRGTVSSKKTWFNELTISKIAYGVLNGLDHLYRQYKIIHRDIKPSNVLINSKGQIKLCDFGVSKKLINSIADTFVGTSTYMSPERIQGNVYSIKGDVWSLGLMIIELVTGEFPLGGHNDTPDGILDLLQRIVNEPSPRLPKDRIYSKEMTDFVNRCCIKNERERSSIHELLHHDLIMKYVSPSKDDKFRHWCRKIKSKIKEDKRIKREALDRAKLEKKQSERSTH.

The region spanning 191-466 is the Protein kinase domain; that stretch reads LVQLGKIGAG…IHELLHHDLI (276 aa). Residues 197–205 and lysine 220 each bind ATP; that span reads IGAGNSGTV. Aspartate 331 (proton acceptor) is an active-site residue. Phosphoserine is present on serine 359. Threonine 363 bears the Phosphothreonine mark.

This sequence belongs to the protein kinase superfamily. STE Ser/Thr protein kinase family. MAP kinase kinase subfamily.

It catalyses the reaction L-seryl-[protein] + ATP = O-phospho-L-seryl-[protein] + ADP + H(+). The catalysed reaction is L-threonyl-[protein] + ATP = O-phospho-L-threonyl-[protein] + ADP + H(+). The enzyme catalyses L-tyrosyl-[protein] + ATP = O-phospho-L-tyrosyl-[protein] + ADP + H(+). Its activity is regulated as follows. Phosphorylated at multiple sites in response to pheromone. Serine/threonine protein kinase required for cell-type-specific transcription and signal transduction in yeast. It is thought that it is phosphorylated by the ste11 protein kinase and that it can phosphorylate the FUS3 and or KSS1 kinases. This chain is Serine/threonine-protein kinase STE7 (STE7), found in Saccharomyces cerevisiae (strain ATCC 204508 / S288c) (Baker's yeast).